The following is a 394-amino-acid chain: Phosphoglycerate kinase (394 aa).

Residues 21 to 23, arginine 36, 59 to 62, arginine 118, and arginine 151 each bind substrate; these read DFN and HLGR. Serine 183 is modified (phosphoserine). ATP is bound by residues lysine 201 and glycine 292. Residue threonine 299 is modified to Phosphothreonine. ATP is bound by residues glutamate 323 and 350 to 353; that span reads GGDS.

This sequence belongs to the phosphoglycerate kinase family. As to quaternary structure, monomer.

It is found in the cytoplasm. The catalysed reaction is (2R)-3-phosphoglycerate + ATP = (2R)-3-phospho-glyceroyl phosphate + ADP. It functions in the pathway carbohydrate degradation; glycolysis; pyruvate from D-glyceraldehyde 3-phosphate: step 2/5. The polypeptide is Phosphoglycerate kinase (Bacillus thuringiensis subsp. konkukian (strain 97-27)).